Reading from the N-terminus, the 798-residue chain is Exo-1,4-beta-xylosidase xlnD (798 aa).

The N-terminal stretch at 1-20 (MPGAASIVAVLAALLPTALG) is a signal peptide. 4 N-linked (GlcNAc...) asparagine glycosylation sites follow: Asn-23, Asn-87, Asn-142, and Asn-237. The active site involves Asp-310. 11 N-linked (GlcNAc...) asparagine glycosylation sites follow: Asn-326, Asn-391, Asn-404, Asn-443, Asn-480, Asn-522, Asn-618, Asn-645, Asn-658, Asn-685, and Asn-707.

The protein belongs to the glycosyl hydrolase 3 family.

The protein resides in the secreted. The catalysed reaction is Hydrolysis of (1-&gt;4)-beta-D-xylans, to remove successive D-xylose residues from the non-reducing termini.. The protein operates within glycan degradation; xylan degradation. Xylan 1,4-beta-xylosidase involved in the hydrolysis of xylan, a major structural heterogeneous polysaccharide found in plant biomass representing the second most abundant polysaccharide in the biosphere, after cellulose. The protein is Exo-1,4-beta-xylosidase xlnD (xlnD) of Aspergillus oryzae (strain ATCC 42149 / RIB 40) (Yellow koji mold).